The following is a 478-amino-acid chain: Cysteine--tRNA ligase (478 aa).

A Zn(2+)-binding site is contributed by Cys-37. Residues 39–49 (PTVYHYAHIGN) carry the 'HIGH' region motif. The Zn(2+) site is built by Cys-224, His-249, and Glu-253. The short motif at 281-285 (KMSKS) is the 'KMSKS' region element. Lys-284 lines the ATP pocket.

Belongs to the class-I aminoacyl-tRNA synthetase family. As to quaternary structure, monomer. Zn(2+) serves as cofactor.

It localises to the cytoplasm. The enzyme catalyses tRNA(Cys) + L-cysteine + ATP = L-cysteinyl-tRNA(Cys) + AMP + diphosphate. The polypeptide is Cysteine--tRNA ligase (Protochlamydia amoebophila (strain UWE25)).